A 250-amino-acid chain; its full sequence is Tumor necrosis factor ligand superfamily member 13 (250 aa).

Positions 1–104 (MPASSPFLLA…ENGERSRKRR (104 aa)) are excised as a propeptide. Disordered regions lie at residues 61–82 (EVSR…PWQS) and 89–108 (DALE…AVLT). The THD domain occupies 116 to 250 (SVLHLVPINA…HGTFLGFVKL (135 aa)). N-linked (GlcNAc...) asparagine glycosylation occurs at Asn124. Cys196 and Cys211 are joined by a disulfide.

Belongs to the tumor necrosis factor family. As to quaternary structure, homotrimer. In terms of processing, the precursor is cleaved by furin. In terms of tissue distribution, expressed at high levels in transformed cell lines, cancers of colon, thyroid, lymphoid tissues and specifically expressed in monocytes and macrophages.

It localises to the secreted. In terms of biological role, cytokine that binds to TNFRSF13B/TACI and to TNFRSF17/BCMA. Plays a role in the regulation of tumor cell growth. May be involved in monocyte/macrophage-mediated immunological processes. The chain is Tumor necrosis factor ligand superfamily member 13 (TNFSF13) from Homo sapiens (Human).